Reading from the N-terminus, the 313-residue chain is MPVAGSELPRRPLPPAAQERDAEPRPPHGELQYLGQIQHILRCGVRKDDRTGTGTLSVFGMQARYSLRDEFPLLTTKRVFWKGVLEELLWFIKGSTNAKELSSKGVKIWDANGSRDFLDSLGFSTREEGDLGPVYGFQWRHFGAEYRDMESDYSGQGVDQLQRVIDTIKTNPDDRRIIMCAWNPRDLPLMALPPCHALCQFYVVNSELSCQLYQRSGDMGLGVPFNIASYALLTYMIAHITGLKPGDFIHTLGDAHIYLNHIEPLKIQLQREPRPFPKLRILRKVEKIDDFKAEDFQIEGYNPHPTIKMEMAV.

Residues 1-28 (MPVAGSELPRRPLPPAAQERDAEPRPPH) are disordered. A compositionally biased stretch (basic and acidic residues) spans 18–28 (QERDAEPRPPH). R50 is a dUMP binding site. Residue S114 is modified to Phosphoserine. DUMP contacts are provided by residues 175-176 (RR), 195-196 (CH), 215-218 (RSGD), N226, and 256-258 (HIY). C195 (nucleophile) is an active-site residue. Position 218 (D218) interacts with (6R)-5,10-methylene-5,6,7,8-tetrahydrofolate. Residues K287, K292, and K308 each participate in a glycyl lysine isopeptide (Lys-Gly) (interchain with G-Cter in SUMO2) cross-link. Position 312 (A312) interacts with (6R)-5,10-methylene-5,6,7,8-tetrahydrofolate.

It belongs to the thymidylate synthase family. In terms of assembly, homodimer.

Its subcellular location is the nucleus. It is found in the cytoplasm. It localises to the mitochondrion. The protein resides in the mitochondrion matrix. The protein localises to the mitochondrion inner membrane. It catalyses the reaction dUMP + (6R)-5,10-methylene-5,6,7,8-tetrahydrofolate = 7,8-dihydrofolate + dTMP. The protein operates within pyrimidine metabolism; dTTP biosynthesis. In terms of biological role, catalyzes the reductive methylation of 2'-deoxyuridine 5'-monophosphate (dUMP) to thymidine 5'-monophosphate (dTMP), using the cosubstrate, 5,10- methylenetetrahydrofolate (CH2H4folate) as a 1-carbon donor and reductant and contributes to the de novo mitochondrial thymidylate biosynthesis pathway. The sequence is that of Thymidylate synthase from Homo sapiens (Human).